A 416-amino-acid chain; its full sequence is Probable glucan 1,3-beta-glucosidase A (416 aa).

The first 22 residues, Met1 to Ala22, serve as a signal peptide directing secretion. Glu211 acts as the Proton donor in catalysis. Cystine bridges form between Cys291–Cys415 and Cys316–Cys342. Glu308 serves as the catalytic Nucleophile. Asn344 carries N-linked (GlcNAc...) asparagine glycosylation.

The protein belongs to the glycosyl hydrolase 5 (cellulase A) family. As to quaternary structure, monomer. Mn(2+) is required as a cofactor.

It localises to the secreted. It carries out the reaction Successive hydrolysis of beta-D-glucose units from the non-reducing ends of (1-&gt;3)-beta-D-glucans, releasing alpha-glucose.. Beta-glucanases participate in the metabolism of beta-glucan, the main structural component of the cell wall. It could also function biosynthetically as a transglycosylase. This chain is Probable glucan 1,3-beta-glucosidase A (exgA), found in Aspergillus fumigatus (strain CBS 144.89 / FGSC A1163 / CEA10) (Neosartorya fumigata).